The primary structure comprises 149 residues: Cytochrome c-type biogenesis protein CcmE (149 aa).

Topologically, residues 1–7 (MKARHKR) are cytoplasmic. A helical; Signal-anchor for type II membrane protein transmembrane segment spans residues 8-28 (LGLIVAGLAALGLGAALVLSA). Over 29-149 (FQKNLVFFFT…GAPALAGALK (121 aa)) the chain is Periplasmic. Residues His-123 and Tyr-127 each coordinate heme.

This sequence belongs to the CcmE/CycJ family.

It localises to the cell inner membrane. Functionally, heme chaperone required for the biogenesis of c-type cytochromes. Transiently binds heme delivered by CcmC and transfers the heme to apo-cytochromes in a process facilitated by CcmF and CcmH. This is Cytochrome c-type biogenesis protein CcmE from Polaromonas naphthalenivorans (strain CJ2).